The primary structure comprises 115 residues: NADH-ubiquinone oxidoreductase chain 3 (115 aa).

Transmembrane regions (helical) follow at residues 4–24, 55–75, and 87–107; these read LMVM…AFWL, FFLV…LLPL, and MMLT…YEWM.

It belongs to the complex I subunit 3 family. Core subunit of respiratory chain NADH dehydrogenase (Complex I) which is composed of 45 different subunits. Interacts with TMEM186. Interacts with TMEM242.

The protein resides in the mitochondrion inner membrane. The enzyme catalyses a ubiquinone + NADH + 5 H(+)(in) = a ubiquinol + NAD(+) + 4 H(+)(out). Its function is as follows. Core subunit of the mitochondrial membrane respiratory chain NADH dehydrogenase (Complex I) which catalyzes electron transfer from NADH through the respiratory chain, using ubiquinone as an electron acceptor. Essential for the catalytic activity of complex I. This chain is NADH-ubiquinone oxidoreductase chain 3, found in Peromyscus mexicanus (Mexican deer mouse).